The primary structure comprises 116 residues: Putative pterin-4-alpha-carbinolamine dehydratase (116 aa).

This sequence belongs to the pterin-4-alpha-carbinolamine dehydratase family.

It carries out the reaction (4aS,6R)-4a-hydroxy-L-erythro-5,6,7,8-tetrahydrobiopterin = (6R)-L-erythro-6,7-dihydrobiopterin + H2O. The polypeptide is Putative pterin-4-alpha-carbinolamine dehydratase (Xylella fastidiosa (strain M12)).